Here is a 513-residue protein sequence, read N- to C-terminus: ATP synthase subunit alpha (513 aa).

Gly-169–Thr-176 provides a ligand contact to ATP.

It belongs to the ATPase alpha/beta chains family. As to quaternary structure, F-type ATPases have 2 components, CF(1) - the catalytic core - and CF(0) - the membrane proton channel. CF(1) has five subunits: alpha(3), beta(3), gamma(1), delta(1), epsilon(1). CF(0) has three main subunits: a(1), b(2) and c(9-12). The alpha and beta chains form an alternating ring which encloses part of the gamma chain. CF(1) is attached to CF(0) by a central stalk formed by the gamma and epsilon chains, while a peripheral stalk is formed by the delta and b chains.

Its subcellular location is the cell inner membrane. The catalysed reaction is ATP + H2O + 4 H(+)(in) = ADP + phosphate + 5 H(+)(out). Produces ATP from ADP in the presence of a proton gradient across the membrane. The alpha chain is a regulatory subunit. This Tolumonas auensis (strain DSM 9187 / NBRC 110442 / TA 4) protein is ATP synthase subunit alpha.